Reading from the N-terminus, the 333-residue chain is Ribosomal RNA small subunit methyltransferase H (333 aa).

S-adenosyl-L-methionine contacts are provided by residues 36-38 (GGY), D54, F81, D102, and Q109.

The protein belongs to the methyltransferase superfamily. RsmH family.

It localises to the cytoplasm. The enzyme catalyses cytidine(1402) in 16S rRNA + S-adenosyl-L-methionine = N(4)-methylcytidine(1402) in 16S rRNA + S-adenosyl-L-homocysteine + H(+). In terms of biological role, specifically methylates the N4 position of cytidine in position 1402 (C1402) of 16S rRNA. The sequence is that of Ribosomal RNA small subunit methyltransferase H from Afipia carboxidovorans (strain ATCC 49405 / DSM 1227 / KCTC 32145 / OM5) (Oligotropha carboxidovorans).